Consider the following 377-residue polypeptide: Pyruvate dehydrogenase E1 component subunit alpha, mitochondrial (377 aa).

A mitochondrion-targeting transit peptide spans Met-1–Ile-26. Positions 83, 109, 110, 156, 158, 187, 188, 189, 216, and 218 each coordinate pyruvate. Positions 109, 110, 156, 158, 187, 188, 189, and 216 each coordinate thiamine diphosphate. Position 187 (Asp-187) interacts with Mg(2+). Residues Asn-216 and Tyr-218 each coordinate Mg(2+). His-283 serves as a coordination point for thiamine diphosphate.

In terms of assembly, tetramer of 2 alpha and 2 beta subunits. It depends on thiamine diphosphate as a cofactor. Requires Mg(2+) as cofactor.

It localises to the mitochondrion matrix. It carries out the reaction N(6)-[(R)-lipoyl]-L-lysyl-[protein] + pyruvate + H(+) = N(6)-[(R)-S(8)-acetyldihydrolipoyl]-L-lysyl-[protein] + CO2. With respect to regulation, E1 activity is regulated by phosphorylation (inactivation) and dephosphorylation (activation) of the alpha subunit. The pyruvate dehydrogenase complex catalyzes the overall conversion of pyruvate to acetyl-CoA and CO(2). It contains multiple copies of three enzymatic components: pyruvate dehydrogenase (E1), dihydrolipoamide acetyltransferase (E2) and lipoamide dehydrogenase (E3). This Dictyostelium discoideum (Social amoeba) protein is Pyruvate dehydrogenase E1 component subunit alpha, mitochondrial (pdhA).